Reading from the N-terminus, the 241-residue chain is Trypsin-1 (241 aa).

A signal peptide spans 1-13 (MKSLIFVLLLGAV). A propeptide spans 14 to 19 (FAEEDK) (activation peptide). The Peptidase S1 domain maps to 20 to 239 (IVGGYECTKH…LSGWVRDTMA (220 aa)). Cystine bridges form between C26/C155, C44/C60, C128/C228, C135/C201, C166/C180, and C191/C215. Active-site charge relay system residues include H59 and D103. Catalysis depends on S195, which acts as the Charge relay system.

This sequence belongs to the peptidase S1 family.

The protein localises to the secreted. It localises to the extracellular space. It carries out the reaction Preferential cleavage: Arg-|-Xaa, Lys-|-Xaa.. In Gadus morhua (Atlantic cod), this protein is Trypsin-1.